An 821-amino-acid chain; its full sequence is Glycogen phosphorylase (821 aa).

Lys667 carries the post-translational modification N6-(pyridoxal phosphate)lysine.

The protein belongs to the glycogen phosphorylase family. Pyridoxal 5'-phosphate is required as a cofactor.

It catalyses the reaction [(1-&gt;4)-alpha-D-glucosyl](n) + phosphate = [(1-&gt;4)-alpha-D-glucosyl](n-1) + alpha-D-glucose 1-phosphate. Phosphorylase is an important allosteric enzyme in carbohydrate metabolism. Enzymes from different sources differ in their regulatory mechanisms and in their natural substrates. However, all known phosphorylases share catalytic and structural properties. The protein is Glycogen phosphorylase (glgP) of Haemophilus influenzae (strain ATCC 51907 / DSM 11121 / KW20 / Rd).